The chain runs to 66 residues: Putative ankyrin repeat protein RF_pd14 (66 aa).

One copy of the ANK repeat lies at 14–66; sequence KLNQKLMRAAATGDIEAVQKLVLRGADIYCRDHQGDTALSLAAGSGYLDILDI.

This Rickettsia felis (strain ATCC VR-1525 / URRWXCal2) (Rickettsia azadi) protein is Putative ankyrin repeat protein RF_pd14.